We begin with the raw amino-acid sequence, 511 residues long: Xylose import ATP-binding protein XylG (511 aa).

2 ABC transporter domains span residues 6–244 and 261–506; these read LEMR…VGRE and FEAR…IGKP.

It belongs to the ABC transporter superfamily. Xylose importer (TC 3.A.1.2.4) family. The complex is composed of two ATP-binding proteins (XylG), two transmembrane proteins (XylH) and a solute-binding protein (XylF).

The protein resides in the cell inner membrane. The catalysed reaction is D-xylose(out) + ATP + H2O = D-xylose(in) + ADP + phosphate + H(+). In terms of biological role, part of the ABC transporter complex XylFGH involved in xylose import. Responsible for energy coupling to the transport system. In Brucella melitensis biotype 1 (strain ATCC 23456 / CCUG 17765 / NCTC 10094 / 16M), this protein is Xylose import ATP-binding protein XylG.